The primary structure comprises 124 residues: Large ribosomal subunit protein bL12 (124 aa).

It belongs to the bacterial ribosomal protein bL12 family. In terms of assembly, homodimer. Part of the ribosomal stalk of the 50S ribosomal subunit. Forms a multimeric L10(L12)X complex, where L10 forms an elongated spine to which 2 to 4 L12 dimers bind in a sequential fashion. Binds GTP-bound translation factors.

Its function is as follows. Forms part of the ribosomal stalk which helps the ribosome interact with GTP-bound translation factors. Is thus essential for accurate translation. The chain is Large ribosomal subunit protein bL12 from Idiomarina loihiensis (strain ATCC BAA-735 / DSM 15497 / L2-TR).